The following is a 142-amino-acid chain: Large ribosomal subunit protein uL11 (142 aa).

Belongs to the universal ribosomal protein uL11 family. Part of the ribosomal stalk of the 50S ribosomal subunit. Interacts with L10 and the large rRNA to form the base of the stalk. L10 forms an elongated spine to which L12 dimers bind in a sequential fashion forming a multimeric L10(L12)X complex. One or more lysine residues are methylated.

Forms part of the ribosomal stalk which helps the ribosome interact with GTP-bound translation factors. The polypeptide is Large ribosomal subunit protein uL11 (Mycobacterium leprae (strain Br4923)).